Here is a 424-residue protein sequence, read N- to C-terminus: Interleukin-13 receptor subunit alpha-1 (424 aa).

Residues 1 to 25 form the signal peptide; sequence MARPALLGELLVLLLWTATVGQVAA. The Extracellular portion of the chain corresponds to 26–340; the sequence is ATEVQPPVTN…QSIGKEQNST (315 aa). Residues 32–121 form the Fibronectin type-III 1 domain; it reads PVTNLSVSVE…VKKCISPPEG (90 aa). 4 N-linked (GlcNAc...) asparagine glycosylation sites follow: N35, N59, N103, and N136. C44 and C93 are joined by a disulfide. Disulfide bonds link C132/C142 and C171/C183. The region spanning 224 to 336 is the Fibronectin type-III 2 domain; the sequence is KPDPPHIKHL…WSEAQSIGKE (113 aa). N262 carries N-linked (GlcNAc...) asparagine glycosylation. Residues 324–328 carry the WSXWS motif motif; sequence WSDWS. An N-linked (GlcNAc...) asparagine glycan is attached at N338. Residues 341-364 traverse the membrane as a helical segment; the sequence is FYTTMLLTIPVFVAVAVIILLFYL. At 365–424 the chain is on the cytoplasmic side; it reads KRLKIIIFPPIPDPGKIFKEMFGDQNDDTLHWKKYDIYEKQSKEETDSVVLIENLKKAAP. The Box 1 motif signature appears at 371–379; sequence IFPPIPDPG.

It belongs to the type I cytokine receptor family. Type 5 subfamily. Interleukin-13 receptor is a complex of IL4R, IL13RA1, and possibly other components. Interacts with TRAF3IP1. Interacts with IL4. Spleen, liver, thymus, heart, lung, kidney, testis, stomach, brain, skin, and colon; but not skeletal muscle.

The protein resides in the membrane. Functionally, binds with low affinity to interleukin-13 (IL13). Together with IL4RA can form a functional receptor for IL13. Also serves as an alternate accessory protein to the common cytokine receptor gamma chain for interleukin-4 (IL4) signaling, but cannot replace the function of IL2RG in allowing enhanced interleukin-2 (IL2) binding activity. This chain is Interleukin-13 receptor subunit alpha-1 (Il13ra1), found in Mus musculus (Mouse).